The chain runs to 324 residues: Phospho-N-acetylmuramoyl-pentapeptide-transferase (324 aa).

10 consecutive transmembrane segments (helical) span residues 9–29 (TFAV…PFLV), 53–73 (TMGA…FSFI), 77–97 (VSAA…LGFL), 117–137 (FLGQ…NGFA), 147–167 (IEVD…VGFS), 176–196 (LDGL…VIAF), 201–221 (MDVA…LLFN), 227–247 (IFMG…ISIL), 253–273 (LLLL…LQVF), and 304–324 (VLTF…VVIF).

This sequence belongs to the glycosyltransferase 4 family. MraY subfamily. It depends on Mg(2+) as a cofactor.

It is found in the cell membrane. The enzyme catalyses UDP-N-acetyl-alpha-D-muramoyl-L-alanyl-gamma-D-glutamyl-meso-2,6-diaminopimeloyl-D-alanyl-D-alanine + di-trans,octa-cis-undecaprenyl phosphate = di-trans,octa-cis-undecaprenyl diphospho-N-acetyl-alpha-D-muramoyl-L-alanyl-D-glutamyl-meso-2,6-diaminopimeloyl-D-alanyl-D-alanine + UMP. The protein operates within cell wall biogenesis; peptidoglycan biosynthesis. In terms of biological role, catalyzes the initial step of the lipid cycle reactions in the biosynthesis of the cell wall peptidoglycan: transfers peptidoglycan precursor phospho-MurNAc-pentapeptide from UDP-MurNAc-pentapeptide onto the lipid carrier undecaprenyl phosphate, yielding undecaprenyl-pyrophosphoryl-MurNAc-pentapeptide, known as lipid I. This chain is Phospho-N-acetylmuramoyl-pentapeptide-transferase, found in Listeria monocytogenes serotype 4b (strain CLIP80459).